An 85-amino-acid polypeptide reads, in one-letter code: Protein RnfH (85 aa).

This sequence belongs to the UPF0125 (RnfH) family.

The sequence is that of Protein RnfH from Cereibacter sphaeroides (strain ATCC 17023 / DSM 158 / JCM 6121 / CCUG 31486 / LMG 2827 / NBRC 12203 / NCIMB 8253 / ATH 2.4.1.) (Rhodobacter sphaeroides).